A 167-amino-acid chain; its full sequence is Large ribosomal subunit protein uL5 (167 aa).

Belongs to the universal ribosomal protein uL5 family. Part of the 50S ribosomal subunit; contacts the 5S rRNA and probably tRNA. Forms a bridge to the 30S subunit in the 70S ribosome.

Functionally, this is one of the proteins that bind and probably mediate the attachment of the 5S RNA into the large ribosomal subunit, where it forms part of the central protuberance. In the 70S ribosome it contacts protein S13 of the 30S subunit (bridge B1b), connecting the 2 subunits; this bridge is implicated in subunit movement. May contact the P site tRNA; the 5S rRNA and some of its associated proteins might help stabilize positioning of ribosome-bound tRNAs. This is Large ribosomal subunit protein uL5 from Methanoculleus marisnigri (strain ATCC 35101 / DSM 1498 / JR1).